We begin with the raw amino-acid sequence, 509 residues long: Pancreatic secretory granule membrane major glycoprotein GP2 (509 aa).

Positions 1-21 are cleaved as a signal peptide; sequence MVGSYVLWLALASCILTLASP. A D10C region spans residues 36-56; the sequence is DPCQNYTLLDEPSRSTENTEG. 10 cysteine pairs are disulfide-bonded: cysteine 38/cysteine 132, cysteine 60/cysteine 147, cysteine 82/cysteine 120, cysteine 88/cysteine 152, cysteine 113/cysteine 121, cysteine 162/cysteine 172, cysteine 166/cysteine 181, cysteine 183/cysteine 213, cysteine 201/cysteine 292, and cysteine 233/cysteine 256. Asparagine 40, asparagine 97, and asparagine 109 each carry an N-linked (GlcNAc...) asparagine glycan. The EGF-like domain maps to 158–202; that stretch reads ATDKCKNLCRPEEACSFLNGTWDCFCRSDLNSSDVHSLQPRLNCG. N-linked (GlcNAc...) asparagine glycans are attached at residues asparagine 176, asparagine 188, and asparagine 232. Residues 200-293 are ZP-N; the sequence is NCGAKEIQVS…TILNINFQCA (94 aa). One can recognise a ZP domain in the interval 200-456; it reads NCGAKEIQVS…PCCSRSQQRS (257 aa). N-linked (GlcNAc...) asparagine glycosylation is found at asparagine 263 and asparagine 314. The flexible ZP-N/ZP-C linker stretch occupies residues 294-317; that stretch reads YPLDMKVSLQTALHPIVSSLNISV. Residues 318–329 form an internal hydrophobic patch (IHP) region; the sequence is DGEGEFTVRMAL. A ZP-C region spans residues 318 to 456; it reads DGEGEFTVRM…PCCSRSQQRS (139 aa). Intrachain disulfides connect cysteine 373/cysteine 433, cysteine 394/cysteine 449, and cysteine 438/cysteine 445. The segment at 463–471 is external hydrophobic patch (EHP); that stretch reads PARVLDLGP. A lipid anchor (GPI-anchor amidated aspartate) is attached at aspartate 484. The propeptide at 485 to 509 is removed in mature form; the sequence is GTPSTAGFLLAWPMLLLPILLAELF.

Interacts with SYCN. Interacts with bacterial adhesin fimH. Post-translationally, N-glycosylated. As to expression, expressed in pancreas.

The protein resides in the zymogen granule membrane. The protein localises to the secreted. It localises to the cell membrane. Its subcellular location is the apical cell membrane. It is found in the membrane raft. The protein resides in the endosome. Functionally, functions as an intestinal M-cell transcytotic receptor specific of type-I-piliated bacteria that participates in the mucosal immune response toward these bacteria. At the apical membrane of M-cells it binds fimH, a protein of the bacteria type I pilus tip. Internalizes bound bacteria, like E.coli and S.typhimurium, from the lumen of the intestine and delivers them, through M-cells, to the underlying organized lymphoid follicles where they are captured by antigen-presenting dendritic cells to elicit a mucosal immune response. The sequence is that of Pancreatic secretory granule membrane major glycoprotein GP2 from Canis lupus familiaris (Dog).